We begin with the raw amino-acid sequence, 951 residues long: Protein translocase subunit SecA (951 aa).

Residues Gln-90, 108 to 112, and Asp-509 contribute to the ATP site; that span reads GEGKT.

The protein belongs to the SecA family. In terms of assembly, monomer and homodimer. Part of the essential Sec protein translocation apparatus which comprises SecA, SecYEG and auxiliary proteins SecDF. Other proteins may also be involved.

Its subcellular location is the cell inner membrane. The protein resides in the cellular thylakoid membrane. The protein localises to the cytoplasm. It catalyses the reaction ATP + H2O + cellular proteinSide 1 = ADP + phosphate + cellular proteinSide 2.. Its function is as follows. Part of the Sec protein translocase complex. Interacts with the SecYEG preprotein conducting channel. Has a central role in coupling the hydrolysis of ATP to the transfer of proteins into and across the cell membrane, serving as an ATP-driven molecular motor driving the stepwise translocation of polypeptide chains across the membrane. In terms of biological role, probably participates in protein translocation into and across both the cytoplasmic and thylakoid membranes in cyanobacterial cells. The sequence is that of Protein translocase subunit SecA from Prochlorococcus marinus (strain MIT 9303).